The sequence spans 447 residues: Tryptophan 5-hydroxylase 1 (447 aa).

The ACT domain occupies 22–97; the sequence is TLIFSLENEV…TVLSVDSPDQ (76 aa). At S61 the chain carries Phosphoserine; by PKA. L-tryptophan contacts are provided by Y238, R260, and T268. Fe cation-binding residues include H275, H280, and E320. Residues S339 and I369 each coordinate L-tryptophan.

The protein belongs to the biopterin-dependent aromatic amino acid hydroxylase family. Homotetramer. Interacts with DNAJC12. It depends on Fe(2+) as a cofactor. Ubiquitinated, leading to its degradation by the proteasome. Ubiquitinated is triggered by phosphorylation. In terms of processing, phosphorylated; triggering degradation by the proteasome.

The enzyme catalyses (6R)-L-erythro-5,6,7,8-tetrahydrobiopterin + L-tryptophan + O2 = 5-hydroxy-L-tryptophan + (4aS,6R)-4a-hydroxy-L-erythro-5,6,7,8-tetrahydrobiopterin. The protein operates within aromatic compound metabolism; serotonin biosynthesis; serotonin from L-tryptophan: step 1/2. In terms of biological role, oxidizes L-tryptophan to 5-hydroxy-l-tryptophan in the rate-determining step of serotonin biosynthesis. The protein is Tryptophan 5-hydroxylase 1 of Mus musculus (Mouse).